The following is a 59-amino-acid chain: Potassium channel toxin alpha-KTx 4.1 (59 aa).

Residues 1-22 (MKAFYGILIIFILISMIDLSKQ) form the signal peptide. Intrachain disulfides connect cysteine 29–cysteine 50, cysteine 35–cysteine 55, and cysteine 39–cysteine 57. The interval 48–55 (GKCMNGKC) is interaction with Ca(2+)-activated K(+) channels.

It belongs to the short scorpion toxin superfamily. Potassium channel inhibitor family. Alpha-KTx 04 subfamily. As to expression, expressed by the venom gland.

It localises to the secreted. Its function is as follows. Potently blocks Kv1.1/KCNA1 (85%), Kv1.2/KCNA2 (91%), Kv1.3/KCNA3 (89%), Kv1.6/KCNA6 (94%), and Shaker (97%). The polypeptide is Potassium channel toxin alpha-KTx 4.1 (Tityus serrulatus (Brazilian scorpion)).